Consider the following 609-residue polypeptide: Glutamine--fructose-6-phosphate aminotransferase [isomerizing] (609 aa).

Cys2 acts as the Nucleophile; for GATase activity in catalysis. The Glutamine amidotransferase type-2 domain occupies 2 to 218 (CGIVGAVAQR…EGDVAEVTRR (217 aa)). SIS domains follow at residues 286-426 (AAEF…HNGM) and 458-599 (LAED…VDQP). Lys604 acts as the For Fru-6P isomerization activity in catalysis.

As to quaternary structure, homodimer.

Its subcellular location is the cytoplasm. It catalyses the reaction D-fructose 6-phosphate + L-glutamine = D-glucosamine 6-phosphate + L-glutamate. Catalyzes the first step in hexosamine metabolism, converting fructose-6P into glucosamine-6P using glutamine as a nitrogen source. The protein is Glutamine--fructose-6-phosphate aminotransferase [isomerizing] of Shewanella oneidensis (strain ATCC 700550 / JCM 31522 / CIP 106686 / LMG 19005 / NCIMB 14063 / MR-1).